We begin with the raw amino-acid sequence, 503 residues long: MVSIRPDEISSIIRQQIEQYEQSINVDNVGTVLQVGDGIARVYGLDKVMASELVEFEDGTVGIALNLEEDNVGVVLMGAGLGIEEGSTVRATGKIASVPVGEAVIGRVVDALMRPIDGKGEIHATATRLLESPAPGIVQRKSVCEPLQTGITAIDAMIPIGRGQRELIIGDRQTGKTAVAIDTILNQKGQDVICVYVAIGQKASSVAQVVNVLRERGALDYTIVVAANASDPAALQYLAPYTGASIAEYFMYQGKHTLVIYDDLSKQAQAYRQMSLLLRRPPGREAYPGDVFYLHSRLLERAAKLNDALGGGSMTALPIVETQAGDVSAYIPTNVISITDGQIFLSSDLFNAGLRPAINAGISVSRVGSAAQIKAMKQVAGKLKLELAQFDELQAFAQFASDLDKATQNQLARGQRLREILKQPQYSPIPVEYQVATIYAGTNGYLDDIPVEAVAKFVAGLRDYLATSKPQYGEAVRSSQKLDETAEALLKEAIAEYKAGFTA.

171 to 178 (DRQTGKTA) contacts ATP.

Belongs to the ATPase alpha/beta chains family. As to quaternary structure, F-type ATPases have 2 components, CF(1) - the catalytic core - and CF(0) - the membrane proton channel. CF(1) has five subunits: alpha(3), beta(3), gamma(1), delta(1), epsilon(1). CF(0) has four main subunits: a(1), b(1), b'(1) and c(9-12).

It is found in the cellular thylakoid membrane. The catalysed reaction is ATP + H2O + 4 H(+)(in) = ADP + phosphate + 5 H(+)(out). Functionally, produces ATP from ADP in the presence of a proton gradient across the membrane. The alpha chain is a regulatory subunit. The polypeptide is ATP synthase subunit alpha (Synechococcus sp. (strain PCC 6716)).